The primary structure comprises 136 residues: uncharacterized protein (136 aa).

Residues leucine 19–phenylalanine 39 form a helical membrane-spanning segment. Disordered regions lie at residues serine 54 to proline 87 and lysine 112 to tyrosine 136.

The protein resides in the membrane. This is an uncharacterized protein from Arabidopsis thaliana (Mouse-ear cress).